The primary structure comprises 102 residues: Acid shock protein (102 aa).

Residues 1–21 form the signal peptide; that stretch reads MKKVLALVVAAAMGLSSAAFA. The span at 22–41 shows a compositional bias: low complexity; it reads AETATTPAPTATTTKAAPAK. A propeptide spanning residues 22–58 is cleaved from the precursor; that stretch reads AETATTPAPTATTTKAAPAKTTHHKKQHKAAPAQKAQ. The segment at 22 to 102 is disordered; that stretch reads AETATTPAPT…PAKPAAQPAA (81 aa). The segment covering 80-90 has biased composition (basic residues); it reads AAKKHAKKHSH. Residues 91–102 are compositionally biased toward low complexity; the sequence is QQPAKPAAQPAA.

This sequence belongs to the Asr family. Post-translationally, proteolytic processing gives rise to the active protein.

The protein localises to the periplasm. Its function is as follows. Required for growth and/or survival at acidic conditions. This chain is Acid shock protein, found in Escherichia coli O17:K52:H18 (strain UMN026 / ExPEC).